We begin with the raw amino-acid sequence, 400 residues long: MKFVDEVQIRVDAGDGGNGCVSFRREKYIPNGGPDGGDGGDGGDVYLIADENLNTLIDYRFERFHAAERGENGQSANCTGRRGKDRILRVPVGTRASDEDTGELLGDLTHHGQKLLVAKGGFHGLGNTRFKSSVNRAPRQKSSGTPGEVRTLKLELLLLADVGMLGLPNAGKSTFIRAVSAARPKVADYPFTTLVPNLGVVRGENSRSFVIADIPGLIEGAAEGAGLGIRFLKHLERCRVLIHLVDICPVDDSDPAENAVTIVKELEKYSPELAGKPRWLVFNKMDLILEEEAVEVMERVKTALAYEGPVYQISAISKEGTKKVCYDILDLLDTMPRQLAEDARDAIEKVEFKWDDYHKNQLAQAEAEALAASMAFDEGLDEEDWDDDEDDGVEVIYVRD.

The Obg domain occupies methionine 1–leucine 159. The OBG-type G domain occupies alanine 160 to aspartate 333. GTP is bound by residues glycine 166–serine 173, phenylalanine 191–valine 195, aspartate 213–glycine 216, asparagine 283–aspartate 286, and serine 314–isoleucine 316. Mg(2+) is bound by residues serine 173 and threonine 193.

It belongs to the TRAFAC class OBG-HflX-like GTPase superfamily. OBG GTPase family. Monomer. Requires Mg(2+) as cofactor.

It is found in the cytoplasm. In terms of biological role, an essential GTPase which binds GTP, GDP and possibly (p)ppGpp with moderate affinity, with high nucleotide exchange rates and a fairly low GTP hydrolysis rate. Plays a role in control of the cell cycle, stress response, ribosome biogenesis and in those bacteria that undergo differentiation, in morphogenesis control. The sequence is that of GTPase Obg from Aeromonas salmonicida (strain A449).